A 258-amino-acid chain; its full sequence is ADP-ribose glycohydrolase MACROD1 (258 aa).

3 positions are modified to N6-succinyllysine: lysine 29, lysine 36, and lysine 62. Residue lysine 71 forms a Glycyl lysine isopeptide (Lys-Gly) (interchain with G-Cter in SUMO2) linkage. The Macro domain occupies 74 to 255 (NPKYKKDKQL…IYQERLPHYF (182 aa)). 92-94 (GDI) contributes to the substrate binding site. Residue lysine 96 is modified to N6-acetyllysine. Substrate is bound by residues 105–107 (AAN), 112–117 (GGGGVD), 200–206 (ISTGVFG), and phenylalanine 239.

The protein belongs to the MacroD-type family. MacroD1/2-like subfamily. In terms of assembly, interacts with ESR1; Interacts in a manner that is estrogen independent but is enhanced by estrogen. Interacts (via macro domain) with AR.

The protein resides in the nucleus. The enzyme catalyses 3''-O-acetyl-ADP-D-ribose + H2O = ADP-D-ribose + acetate + H(+). It carries out the reaction 2''-O-acetyl-ADP-D-ribose + H2O = ADP-D-ribose + acetate + H(+). It catalyses the reaction 4-O-(ADP-D-ribosyl)-L-aspartyl-[protein] + H2O = L-aspartyl-[protein] + ADP-D-ribose + H(+). The catalysed reaction is 5-O-(ADP-D-ribosyl)-L-glutamyl-[protein] + H2O = L-glutamyl-[protein] + ADP-D-ribose + H(+). The enzyme catalyses alpha-NAD(+) + H2O = ADP-D-ribose + nicotinamide + H(+). Subject to competitive inhibition by the product ADP-ribose. In terms of biological role, removes ADP-ribose from aspartate and glutamate residues in proteins bearing a single ADP-ribose moiety. Inactive towards proteins bearing poly-ADP-ribose. Deacetylates O-acetyl-ADP ribose, a signaling molecule generated by the deacetylation of acetylated lysine residues in histones and other proteins. Plays a role in estrogen signaling. Binds to androgen receptor (AR) and amplifies the transactivation function of AR in response to androgen. May play an important role in carcinogenesis and/or progression of hormone-dependent cancers by feed-forward mechanism that activates ESR1 transactivation. Could be an ESR1 coactivator, providing a positive feedback regulatory loop for ESR1 signal transduction. Could be involved in invasive growth by down-regulating CDH1 in endometrial cancer cells. Enhances ESR1-mediated transcription activity. The sequence is that of ADP-ribose glycohydrolase MACROD1 (Macrod1) from Rattus norvegicus (Rat).